The following is a 354-amino-acid chain: Protein-glutamate methylesterase/protein-glutamine glutaminase (354 aa).

Residues 6–123 form the Response regulatory domain; that stretch reads RVLIVDDSAV…SQSLETLSAA (118 aa). The residue at position 57 (Asp-57) is a 4-aspartylphosphate. Residues 159 to 351 enclose the CheB-type methylesterase domain; that stretch reads ARTTHQLLAV…GDLLKQLQTR (193 aa). Catalysis depends on residues Ser-171, His-197, and Asp-293.

This sequence belongs to the CheB family. Post-translationally, phosphorylated by CheA. Phosphorylation of the N-terminal regulatory domain activates the methylesterase activity.

It is found in the cytoplasm. The enzyme catalyses [protein]-L-glutamate 5-O-methyl ester + H2O = L-glutamyl-[protein] + methanol + H(+). The catalysed reaction is L-glutaminyl-[protein] + H2O = L-glutamyl-[protein] + NH4(+). Involved in chemotaxis. Part of a chemotaxis signal transduction system that modulates chemotaxis in response to various stimuli. Catalyzes the demethylation of specific methylglutamate residues introduced into the chemoreceptors (methyl-accepting chemotaxis proteins or MCP) by CheR. Also mediates the irreversible deamidation of specific glutamine residues to glutamic acid. This Bdellovibrio bacteriovorus (strain ATCC 15356 / DSM 50701 / NCIMB 9529 / HD100) protein is Protein-glutamate methylesterase/protein-glutamine glutaminase.